The chain runs to 317 residues: Fruit protein pKIWI502 (317 aa).

The disordered stretch occupies residues 1 to 29 (MSITLSRPSLSRPSLSRHPSLTLHSSLSH). Residues 71–182 (YIWTPVPISR…TQIIGRGFDI (112 aa)) form the FAD-binding FR-type domain.

This chain is Fruit protein pKIWI502, found in Actinidia deliciosa (Kiwi).